Reading from the N-terminus, the 267-residue chain is Sulfate transporter CysZ (267 aa).

The next 4 membrane-spanning stretches (helical) occupy residues 29–49 (FVIM…WLFI), 73–93 (ILLI…FTTL), 149–169 (IILF…PIIV), and 212–232 (GLVM…PVAV).

The protein belongs to the CysZ family.

It localises to the cell inner membrane. High affinity, high specificity proton-dependent sulfate transporter, which mediates sulfate uptake. Provides the sulfur source for the cysteine synthesis pathway. The chain is Sulfate transporter CysZ from Pasteurella multocida (strain Pm70).